A 156-amino-acid polypeptide reads, in one-letter code: Cyanate hydratase (156 aa).

Active-site residues include Arg96, Glu99, and Ser122.

Belongs to the cyanase family.

The enzyme catalyses cyanate + hydrogencarbonate + 3 H(+) = NH4(+) + 2 CO2. Catalyzes the reaction of cyanate with bicarbonate to produce ammonia and carbon dioxide. This chain is Cyanate hydratase, found in Burkholderia lata (strain ATCC 17760 / DSM 23089 / LMG 22485 / NCIMB 9086 / R18194 / 383).